The primary structure comprises 190 residues: Superoxide dismutase [Fe] (190 aa).

Residues histidine 27, histidine 75, aspartate 156, and histidine 160 each contribute to the Fe cation site.

This sequence belongs to the iron/manganese superoxide dismutase family. Homodimer. Fe cation serves as cofactor.

It catalyses the reaction 2 superoxide + 2 H(+) = H2O2 + O2. Destroys superoxide anion radicals which are normally produced within the cells and which are toxic to biological systems. This chain is Superoxide dismutase [Fe] (SODB), found in Entamoeba histolytica (strain ATCC 30459 / HM-1:IMSS / ABRM).